Here is a 293-residue protein sequence, read N- to C-terminus: Phosphoribosylaminoimidazole-succinocarboxamide synthase (293 aa).

The protein belongs to the SAICAR synthetase family.

It carries out the reaction 5-amino-1-(5-phospho-D-ribosyl)imidazole-4-carboxylate + L-aspartate + ATP = (2S)-2-[5-amino-1-(5-phospho-beta-D-ribosyl)imidazole-4-carboxamido]succinate + ADP + phosphate + 2 H(+). It functions in the pathway purine metabolism; IMP biosynthesis via de novo pathway; 5-amino-1-(5-phospho-D-ribosyl)imidazole-4-carboxamide from 5-amino-1-(5-phospho-D-ribosyl)imidazole-4-carboxylate: step 1/2. This is Phosphoribosylaminoimidazole-succinocarboxamide synthase from Desulfosudis oleivorans (strain DSM 6200 / JCM 39069 / Hxd3) (Desulfococcus oleovorans).